The following is a 342-amino-acid chain: Glycerol-3-phosphate dehydrogenase [NAD(P)+] (342 aa).

Residues W11, R31, and K102 each coordinate NADPH. Sn-glycerol 3-phosphate contacts are provided by K102 and G132. A136 provides a ligand contact to NADPH. Residues K187, D240, S250, R251, and N252 each coordinate sn-glycerol 3-phosphate. The active-site Proton acceptor is the K187. Residue R251 coordinates NADPH. Position 277 (E277) interacts with NADPH.

It belongs to the NAD-dependent glycerol-3-phosphate dehydrogenase family.

The protein resides in the cytoplasm. The enzyme catalyses sn-glycerol 3-phosphate + NAD(+) = dihydroxyacetone phosphate + NADH + H(+). It catalyses the reaction sn-glycerol 3-phosphate + NADP(+) = dihydroxyacetone phosphate + NADPH + H(+). Its pathway is membrane lipid metabolism; glycerophospholipid metabolism. Functionally, catalyzes the reduction of the glycolytic intermediate dihydroxyacetone phosphate (DHAP) to sn-glycerol 3-phosphate (G3P), the key precursor for phospholipid synthesis. The chain is Glycerol-3-phosphate dehydrogenase [NAD(P)+] from Symbiobacterium thermophilum (strain DSM 24528 / JCM 14929 / IAM 14863 / T).